Reading from the N-terminus, the 174-residue chain is ATP-dependent protease subunit HslV (174 aa).

T2 is an active-site residue. Positions 157, 160, and 163 each coordinate Na(+).

The protein belongs to the peptidase T1B family. HslV subfamily. As to quaternary structure, a double ring-shaped homohexamer of HslV is capped on each side by a ring-shaped HslU homohexamer. The assembly of the HslU/HslV complex is dependent on binding of ATP.

It localises to the cytoplasm. It catalyses the reaction ATP-dependent cleavage of peptide bonds with broad specificity.. Its activity is regulated as follows. Allosterically activated by HslU binding. Protease subunit of a proteasome-like degradation complex believed to be a general protein degrading machinery. This is ATP-dependent protease subunit HslV from Shewanella baltica (strain OS195).